We begin with the raw amino-acid sequence, 373 residues long: Mannitol-1-phosphate 5-dehydrogenase (373 aa).

3-14 (ALHFGAGNIGRG) lines the NAD(+) pocket.

It belongs to the mannitol dehydrogenase family.

The enzyme catalyses D-mannitol 1-phosphate + NAD(+) = beta-D-fructose 6-phosphate + NADH + H(+). This Bacillus subtilis (strain 168) protein is Mannitol-1-phosphate 5-dehydrogenase (mtlD).